The following is a 633-amino-acid chain: GTPase-GDP dissociation stimulator BEM4 (633 aa).

Interacts with CDC42; the interaction is direct. Interacts with RHO1; the interaction is direct. Interacts with RHO2. Interacts with RHO4. Interacts with CDC11.

The protein localises to the nucleus. It localises to the cytoplasm. Its function is as follows. Probably acts as a GEF (guanine nucleotide exchange factor) for the Rho family of small GTP-binding proteins (G proteins) that stimulates the dissociation of GDP to enable subsequent binding of GTP. May also chaperone the processing and/or trafficking of small GTPases independently of GEF activity. Involved in the control of polarized cell growth via CDC42-mediated signaling. Involved in the control of cell-wall organization via RHO1-mediated signaling. May also function via RHO2 and RHO4. This is GTPase-GDP dissociation stimulator BEM4 from Saccharomyces cerevisiae (strain ATCC 204508 / S288c) (Baker's yeast).